A 501-amino-acid polypeptide reads, in one-letter code: Cytochrome P450 monooxygenase esdpH (501 aa).

The helical transmembrane segment at 5-22 (RVGILIIGVLATATFWLC) threads the bilayer. Cys-446 lines the heme pocket.

It belongs to the cytochrome P450 family. Requires heme as cofactor.

The protein resides in the membrane. It participates in secondary metabolite biosynthesis; terpenoid biosynthesis. Its function is as follows. Cytochrome P450 monooxygenase; part of the cluster that mediates the biosynthesis of shearones, diterpenoid pyrones (DPs) which are structurally diverse meroterpenoids consisting of a diterpene linked by a pyrone, and which may exhibit a range of bioactivities. Whitin the pathway, esdpH takes part in the molecular scaffold modification via the hydroxylation at C-6' and can transform shearone C into shearone E, shearone D into shearone F, and shearone H into shearone I, the latter being the final product of the pathway. The molecular scaffold is commonly biosynthesized by a series of enzymes including the non-reducing polyketide synthase (NR-PKS) esdpA that generates an alpha-pyrone; the prenyltransferase esdpC that attaches a geranylgeranyl pyrophosphate (GGPP) produced by the GGPP synthase (GGPPS) esdpD onto the pyrone unit; the FAD-dependent monooxygenase esdpE that converts an olefin on the diterpene unit into an epoxide; and the terpene cyclase esdpB that catalyzes the cyclization reactions to give the molecular backbone shearone A. In the modification steps, esdpF oxidizes the hydroxy group to a ketone at C-3 and esdpG then attaches hydroxy groups at both C-11 and C-12. After that, esdpI hydroxylates at C-20 and esdpH hydroxylates at C-6'. The ether bridge is generated by nucleophilic attack of the hydroxy group at C-20 to the carbonyl carbon at C-3. EsdpH can also functions prior to esdpI. The different combinations of these modification enzymes lead to the production of diverse shearone derivatives, shearone I being the end product of the pathway. The alpha-ketoglutarate-dependent dioxygenase esdpJ seems not to be involved in this pathway. The protein is Cytochrome P450 monooxygenase esdpH of Penicillium shearii (Eupenicillium shearii).